The chain runs to 238 residues: Anti-sigma-K factor RskA (238 aa).

At Met-1–Ala-97 the chain is on the cytoplasmic side. A helical membrane pass occupies residues Val-98 to Leu-118. Residues Arg-119–Thr-238 are Extracellular-facing.

It belongs to the anti-sigma-K factor family.

It is found in the cell membrane. Functionally, an anti-sigma factor for extracytoplasmic function (ECF) sigma factor SigK. ECF sigma factors are held in an inactive form by an anti-sigma factor until released by regulated intramembrane proteolysis (RIP). RIP occurs when an extracytoplasmic signal triggers a concerted proteolytic cascade to transmit information and elicit cellular responses. The membrane-spanning regulatory substrate protein is first cut extracytoplasmically (site-1 protease, S1P), then within the membrane itself (site-2 protease, S2P, Rip1), while cytoplasmic proteases finish degrading the regulatory protein, liberating the sigma factor. The polypeptide is Anti-sigma-K factor RskA (rskA) (Mycolicibacterium vanbaalenii (strain DSM 7251 / JCM 13017 / BCRC 16820 / KCTC 9966 / NRRL B-24157 / PYR-1) (Mycobacterium vanbaalenii)).